A 324-amino-acid chain; its full sequence is O-ureido-L-serine synthase (324 aa).

Position 43 is an N6-(pyridoxal phosphate)lysine (lysine 43). Pyridoxal 5'-phosphate is bound by residues asparagine 73, 177–181 (GTTGT), and serine 265.

It belongs to the cysteine synthase/cystathionine beta-synthase family. In terms of assembly, homotetramer. Pyridoxal 5'-phosphate is required as a cofactor.

The catalysed reaction is hydroxyurea + O-acetyl-L-serine = O-ureido-L-serine + acetate + H(+). It catalyses the reaction O-acetyl-L-serine + hydrogen sulfide = L-cysteine + acetate. Involved in the biosynthesis of the antibiotic D-cycloserine (DCS), a cyclic structural analog of D-alanine, used as an antitubercular agent. Catalyzes the addition of hydroxyurea on O-acetyl-L-serine (OAS) to yield O-ureido-L-serine. It prefers sulfide as the second substrate, followed by hydroxyurea, L-homocysteine, and thiosulfate. This is O-ureido-L-serine synthase from Streptomyces lavendulae.